The following is a 239-amino-acid chain: Orotidine 5'-phosphate decarboxylase (239 aa).

Residues Asp-15, Lys-37, 64 to 73, Thr-126, Arg-187, Gln-196, Gly-216, and Arg-217 contribute to the substrate site; that span reads DLKFHDIPNT. Lys-66 functions as the Proton donor in the catalytic mechanism.

It belongs to the OMP decarboxylase family. Type 1 subfamily. Homodimer.

The enzyme catalyses orotidine 5'-phosphate + H(+) = UMP + CO2. It participates in pyrimidine metabolism; UMP biosynthesis via de novo pathway; UMP from orotate: step 2/2. Functionally, catalyzes the decarboxylation of orotidine 5'-monophosphate (OMP) to uridine 5'-monophosphate (UMP). This Geobacter sulfurreducens (strain ATCC 51573 / DSM 12127 / PCA) protein is Orotidine 5'-phosphate decarboxylase.